A 541-amino-acid chain; its full sequence is Membrane protein insertase YidC (541 aa).

6 helical membrane-spanning segments follow: residues 6 to 26 (NILL…WQAD), 325 to 345 (LVVD…LLMF), 349 to 369 (FVGN…GLLF), 420 to 440 (GGCL…WVLL), 457 to 477 (LSVQ…MFVM), and 500 to 520 (VIFT…WLVG).

Belongs to the OXA1/ALB3/YidC family. Type 1 subfamily. Interacts with the Sec translocase complex via SecD. Specifically interacts with transmembrane segments of nascent integral membrane proteins during membrane integration.

It is found in the cell inner membrane. Functionally, required for the insertion and/or proper folding and/or complex formation of integral membrane proteins into the membrane. Involved in integration of membrane proteins that insert both dependently and independently of the Sec translocase complex, as well as at least some lipoproteins. Aids folding of multispanning membrane proteins. This Shewanella baltica (strain OS195) protein is Membrane protein insertase YidC.